The chain runs to 508 residues: Photosystem II CP47 reaction center protein (508 aa).

A run of 6 helical transmembrane segments spans residues 21–36 (SVHI…WAGS), 101–115 (IVFS…IWHW), 140–156 (GIHL…FGAF), 203–218 (IAAG…FHLS), 237–252 (VLSS…AFVV), and 457–472 (TFAL…HGAR).

It belongs to the PsbB/PsbC family. PsbB subfamily. As to quaternary structure, PSII is composed of 1 copy each of membrane proteins PsbA, PsbB, PsbC, PsbD, PsbE, PsbF, PsbH, PsbI, PsbJ, PsbK, PsbL, PsbM, PsbT, PsbX, PsbY, PsbZ, Psb30/Ycf12, at least 3 peripheral proteins of the oxygen-evolving complex and a large number of cofactors. It forms dimeric complexes. The cofactor is Binds multiple chlorophylls. PSII binds additional chlorophylls, carotenoids and specific lipids..

Its subcellular location is the plastid. The protein localises to the chloroplast thylakoid membrane. One of the components of the core complex of photosystem II (PSII). It binds chlorophyll and helps catalyze the primary light-induced photochemical processes of PSII. PSII is a light-driven water:plastoquinone oxidoreductase, using light energy to abstract electrons from H(2)O, generating O(2) and a proton gradient subsequently used for ATP formation. This Chloranthus spicatus (Chulantree) protein is Photosystem II CP47 reaction center protein.